A 283-amino-acid chain; its full sequence is ATP phosphoribosyltransferase (283 aa).

This sequence belongs to the ATP phosphoribosyltransferase family. Long subfamily. Equilibrium between an active dimeric form, an inactive hexameric form and higher aggregates. Interconversion between the various forms is largely reversible and is influenced by the natural substrates and inhibitors of the enzyme. The cofactor is Mg(2+).

The protein localises to the cytoplasm. It catalyses the reaction 1-(5-phospho-beta-D-ribosyl)-ATP + diphosphate = 5-phospho-alpha-D-ribose 1-diphosphate + ATP. The protein operates within amino-acid biosynthesis; L-histidine biosynthesis; L-histidine from 5-phospho-alpha-D-ribose 1-diphosphate: step 1/9. Feedback inhibited by histidine. Catalyzes the condensation of ATP and 5-phosphoribose 1-diphosphate to form N'-(5'-phosphoribosyl)-ATP (PR-ATP). Has a crucial role in the pathway because the rate of histidine biosynthesis seems to be controlled primarily by regulation of HisG enzymatic activity. This chain is ATP phosphoribosyltransferase, found in Mycobacterium sp. (strain KMS).